The chain runs to 643 residues: Alpha-dioxygenase PIOX (643 aa).

The active-site Proton acceptor is histidine 167. Aspartate 168 lines the Ca(2+) pocket. Position 172 (histidine 172) interacts with heme b. Residues threonine 220, tryptophan 222, aspartate 224, and serine 226 each coordinate Ca(2+). Heme b-binding residues include histidine 392, arginine 489, and arginine 493.

The protein belongs to the peroxidase family. The cofactor is heme b. It depends on Ca(2+) as a cofactor.

It carries out the reaction a 1,2-saturated fatty acid + O2 = a (2R)-2-hydroperoxy fatty acid. It catalyses the reaction (9Z,12Z,15Z)-octadecatrienoate + O2 = (R)-2-hydroperoxy-(9Z,12Z,15Z)-octadecatrienoate. The catalysed reaction is (9Z,12Z)-octadecadienoate + O2 = (2R,9Z,12Z)-2-hydroperoxyoctadecadienoate. Its function is as follows. Alpha-dioxygenase that catalyzes the primary oxygenation step of a variety of 14-20 carbon fatty acids, containing up to three unsaturated bonds, into their corresponding 2R-hydroperoxides. Involved in the production of oxylipins that function in cell signaling, wound healing, and protection from infection. This Nicotiana tabacum (Common tobacco) protein is Alpha-dioxygenase PIOX.